The sequence spans 193 residues: Oligoribonuclease (193 aa).

One can recognise an Exonuclease domain in the interval 20–183 (FVWLDCEMTG…ADVHESIEEL (164 aa)). Tyr141 is a catalytic residue.

The protein belongs to the oligoribonuclease family.

It localises to the cytoplasm. 3'-to-5' exoribonuclease specific for small oligoribonucleotides. The sequence is that of Oligoribonuclease from Paracidovorax citrulli (strain AAC00-1) (Acidovorax citrulli).